Consider the following 113-residue polypeptide: Cell division protein FtsB (113 aa).

At 1–3 (MRL) the chain is on the cytoplasmic side. A helical membrane pass occupies residues 4-21 (ISLLLFVLLLAIQYPLWL). The Periplasmic portion of the chain corresponds to 22–113 (GKGGWLRVWE…PNSPAATGRH (92 aa)). A coiled-coil region spans residues 34–63 (HQVQEQATRNQMLKLRNAKLEGEVKDLQDG). The segment at 93-113 (KVSATPPLPPPPNSPAATGRH) is disordered.

The protein belongs to the FtsB family. In terms of assembly, part of a complex composed of FtsB, FtsL and FtsQ.

It localises to the cell inner membrane. Essential cell division protein. May link together the upstream cell division proteins, which are predominantly cytoplasmic, with the downstream cell division proteins, which are predominantly periplasmic. The protein is Cell division protein FtsB of Cupriavidus pinatubonensis (strain JMP 134 / LMG 1197) (Cupriavidus necator (strain JMP 134)).